The sequence spans 271 residues: Tryptophan synthase alpha chain (271 aa).

Active-site proton acceptor residues include glutamate 49 and aspartate 60.

Belongs to the TrpA family. In terms of assembly, tetramer of two alpha and two beta chains.

It catalyses the reaction (1S,2R)-1-C-(indol-3-yl)glycerol 3-phosphate + L-serine = D-glyceraldehyde 3-phosphate + L-tryptophan + H2O. Its pathway is amino-acid biosynthesis; L-tryptophan biosynthesis; L-tryptophan from chorismate: step 5/5. In terms of biological role, the alpha subunit is responsible for the aldol cleavage of indoleglycerol phosphate to indole and glyceraldehyde 3-phosphate. In Blochmanniella floridana, this protein is Tryptophan synthase alpha chain.